We begin with the raw amino-acid sequence, 428 residues long: Putative aminotransferase MSMEG_6286/MSMEI_6121 (428 aa).

Residue Gly37 participates in substrate binding. Residues Tyr72, 102 to 105 (ASLE), Asn191, 222 to 225 (AYAV), and 256 to 258 (STS) each bind pyridoxal 5'-phosphate. Lys339 is covalently cross-linked (Isoglutamyl lysine isopeptide (Lys-Gln) (interchain with Q-Cter in protein Pup)).

This sequence belongs to the class-I pyridoxal-phosphate-dependent aminotransferase family. Pyridoxal 5'-phosphate is required as a cofactor.

The chain is Putative aminotransferase MSMEG_6286/MSMEI_6121 from Mycolicibacterium smegmatis (strain ATCC 700084 / mc(2)155) (Mycobacterium smegmatis).